A 207-amino-acid polypeptide reads, in one-letter code: MRPAKPPQSKERKRSKSLTSADHDNSPQRAETAASALRQRIRVVPDFPSRGIVFEDLTPVLADPHSFKLLVQDLANHCRNFDIDLIGGLDARGFLLGSAVAYELGVGILAVRKGGKLPPPVHHVDYSLEYGTASLEIPADNAIPLQGKNVFLIDDVLATGGTLSASRELLENAGANVCGLGVVLEVSALDGRDRLKDLPLYVVDQAG.

Positions 1–33 (MRPAKPPQSKERKRSKSLTSADHDNSPQRAETA) are disordered.

This sequence belongs to the purine/pyrimidine phosphoribosyltransferase family. Homodimer.

It is found in the cytoplasm. The catalysed reaction is AMP + diphosphate = 5-phospho-alpha-D-ribose 1-diphosphate + adenine. Its pathway is purine metabolism; AMP biosynthesis via salvage pathway; AMP from adenine: step 1/1. Catalyzes a salvage reaction resulting in the formation of AMP, that is energically less costly than de novo synthesis. The polypeptide is Adenine phosphoribosyltransferase (Corynebacterium jeikeium (strain K411)).